A 185-amino-acid polypeptide reads, in one-letter code: UPF0200 protein TK1334 (185 aa).

Gly-7 to Ser-14 contacts ATP.

It belongs to the UPF0200 family.

The polypeptide is UPF0200 protein TK1334 (Thermococcus kodakarensis (strain ATCC BAA-918 / JCM 12380 / KOD1) (Pyrococcus kodakaraensis (strain KOD1))).